The primary structure comprises 771 residues: Probable aconitate hydratase, mitochondrial (771 aa).

Residues Q86 and D179–H181 each bind substrate. Residues C372, C435, and C438 each coordinate [4Fe-4S] cluster. Residues R461, R466, R594, and S657–R658 contribute to the substrate site.

This sequence belongs to the aconitase/IPM isomerase family. In terms of assembly, monomer. [4Fe-4S] cluster is required as a cofactor.

The protein localises to the mitochondrion. It catalyses the reaction citrate = D-threo-isocitrate. It functions in the pathway carbohydrate metabolism; tricarboxylic acid cycle; isocitrate from oxaloacetate: step 2/2. Functionally, catalyzes the isomerization of citrate to isocitrate via cis-aconitate. This Dictyostelium discoideum (Social amoeba) protein is Probable aconitate hydratase, mitochondrial (aco2).